Reading from the N-terminus, the 323-residue chain is tRNA N6-adenosine threonylcarbamoyltransferase (323 aa).

Fe cation contacts are provided by His-105, His-109, and Tyr-126. Residues 126 to 130 (YVSGG), Asp-158, Gly-171, Glu-175, and Asn-255 each bind substrate. A Fe cation-binding site is contributed by Asp-283.

Belongs to the KAE1 / TsaD family. In terms of assembly, monomer. Component of the KEOPS complex that consists of Kae1, Bud32, Cgi121 and Pcc1; the whole complex dimerizes. Requires Fe(2+) as cofactor.

It is found in the cytoplasm. It carries out the reaction L-threonylcarbamoyladenylate + adenosine(37) in tRNA = N(6)-L-threonylcarbamoyladenosine(37) in tRNA + AMP + H(+). Its function is as follows. Required for the formation of a threonylcarbamoyl group on adenosine at position 37 (t(6)A37) in tRNAs that read codons beginning with adenine. Is a component of the KEOPS complex that is probably involved in the transfer of the threonylcarbamoyl moiety of threonylcarbamoyl-AMP (TC-AMP) to the N6 group of A37. Kae1 likely plays a direct catalytic role in this reaction, but requires other protein(s) of the complex to fulfill this activity. The sequence is that of tRNA N6-adenosine threonylcarbamoyltransferase from Archaeoglobus fulgidus (strain ATCC 49558 / DSM 4304 / JCM 9628 / NBRC 100126 / VC-16).